Reading from the N-terminus, the 441-residue chain is Trigger factor (441 aa).

A PPIase FKBP-type domain is found at 161 to 246; sequence GDQVTIDFVG…VSEVAEQILP (86 aa).

The protein belongs to the FKBP-type PPIase family. Tig subfamily.

It localises to the cytoplasm. It carries out the reaction [protein]-peptidylproline (omega=180) = [protein]-peptidylproline (omega=0). In terms of biological role, involved in protein export. Acts as a chaperone by maintaining the newly synthesized protein in an open conformation. Functions as a peptidyl-prolyl cis-trans isomerase. The sequence is that of Trigger factor from Marinomonas sp. (strain MWYL1).